We begin with the raw amino-acid sequence, 312 residues long: Aspartate carbamoyltransferase catalytic subunit (312 aa).

2 residues coordinate carbamoyl phosphate: Arg-55 and Thr-56. Lys-83 is an L-aspartate binding site. Arg-105, His-138, and Gln-141 together coordinate carbamoyl phosphate. 2 residues coordinate L-aspartate: Arg-171 and Arg-225. Residues Gly-266 and Pro-267 each contribute to the carbamoyl phosphate site.

This sequence belongs to the aspartate/ornithine carbamoyltransferase superfamily. ATCase family. As to quaternary structure, heterododecamer (2C3:3R2) of six catalytic PyrB chains organized as two trimers (C3), and six regulatory PyrI chains organized as three dimers (R2).

The catalysed reaction is carbamoyl phosphate + L-aspartate = N-carbamoyl-L-aspartate + phosphate + H(+). It functions in the pathway pyrimidine metabolism; UMP biosynthesis via de novo pathway; (S)-dihydroorotate from bicarbonate: step 2/3. In terms of biological role, catalyzes the condensation of carbamoyl phosphate and aspartate to form carbamoyl aspartate and inorganic phosphate, the committed step in the de novo pyrimidine nucleotide biosynthesis pathway. This is Aspartate carbamoyltransferase catalytic subunit from Corynebacterium efficiens (strain DSM 44549 / YS-314 / AJ 12310 / JCM 11189 / NBRC 100395).